We begin with the raw amino-acid sequence, 137 residues long: Small ribosomal subunit protein uS19 (137 aa).

A disordered region spans residues 115-137 (RNRVSHGSAGVGATRSSKFVPLK).

This sequence belongs to the universal ribosomal protein uS19 family.

Protein S19 forms a complex with S13 that binds strongly to the 16S ribosomal RNA. The chain is Small ribosomal subunit protein uS19 from Methanococcoides burtonii (strain DSM 6242 / NBRC 107633 / OCM 468 / ACE-M).